The chain runs to 472 residues: MSCGIANAIRWDVSLLIHRSMSSSMSSVQPTSPVSDSPSLGEMHASVAVSRRGHWGFRLLAFLGPGYMVSVGYMDPGNWATGLAGGSRFGYMLLSVILLSNVMAIVLQALAARLGIASDMDLAQACRARYSRGTTLALWVVCELAIIACDLAEVIGTAIALNLLLGVPIIWGVVITAVDVVLVLLLMHRGFRALEAFVIALLLVIFGCFVVQIVLAAPPLQEVLGGFVPRWQVVADPQALYLAIGIVGATVMPHNLYLHSSIVQTRAYPRTPVGRRSALRWAVADSTLALMLALFINASILILAAAVFHAQHHFDVEEIEQAYQLLAPVLGVGVAATLFATALLASGINSTVTATLAGQIVMEGFLRLRLRPWLRRVLTRGLAIVPVIVVVALYGEQGTGRLLLLSQVILSMQLPFAVIPLLRCVADRKVMGALVAPRWLMVVAWLIAGVIVVLNVKLLGDYAVHLMVGVSD.

11 helical membrane-spanning segments follow: residues 59–79 (LLAF…PGNW), 92–112 (MLLS…ALAA), 136–156 (LALW…EVIG), 167–187 (VPII…LLLM), 196–216 (AFVI…IVLA), 233–253 (VVAD…TVMP), 288–308 (LALM…AAVF), 325–345 (LLAP…ALLA), 377–397 (VLTR…YGEQ), 402–422 (LLLL…IPLL), and 439–459 (WLMV…VKLL).

The protein belongs to the NRAMP family.

Its subcellular location is the cell inner membrane. Functionally, h(+)-stimulated, divalent metal cation uptake system. The chain is Divalent metal cation transporter MntH from Xylella fastidiosa (strain 9a5c).